We begin with the raw amino-acid sequence, 409 residues long: MSVFDSKFKGIHVYSEIGELETVLVHEPGKEIDYITPARLDELLFSAILESHDARKEHKEFVAELKKRGINVVELVDLIVETYDLASKEAKEKLLEEFLDDSVPVLSDEHRAAVKKFLQSQKSTRSLVEYMIAGITKHDLKIESDLELIVDPMPNLYFTRDPFASVGNGVTIHYMRYKVRQRETLFSRFVFSNHPKLVNTPWYYDPAEGLSIEGGDVFIYNNDTLVVGVSERTDLQTITLLAKNIKANKECEFKRIVAINVPKWTNLMHLDTWLTMLDKDKFLYSPIANDVFKFWDYDLVNGGDAPQPVDNGLPLEDLLKSIIGKKPTLIPIAGAGASQIDIERETHFDGTNYLAVAPGIVIGYARNEKTNAALEAAGITVLPFRGNQLSLGMGNARCMSMPLSRKDVK.

The Amidino-cysteine intermediate role is filled by C398.

This sequence belongs to the arginine deiminase family.

Its subcellular location is the cytoplasm. The catalysed reaction is L-arginine + H2O = L-citrulline + NH4(+). It functions in the pathway amino-acid degradation; L-arginine degradation via ADI pathway; carbamoyl phosphate from L-arginine: step 1/2. This is Arginine deiminase from Metamycoplasma arthritidis (strain 158L3-1) (Mycoplasma arthritidis).